The chain runs to 432 residues: Trigger factor (432 aa).

Residues 163-248 (GDVVVLDFAA…VHAVKERRLP (86 aa)) enclose the PPIase FKBP-type domain.

Belongs to the FKBP-type PPIase family. Tig subfamily.

The protein localises to the cytoplasm. The enzyme catalyses [protein]-peptidylproline (omega=180) = [protein]-peptidylproline (omega=0). Functionally, involved in protein export. Acts as a chaperone by maintaining the newly synthesized protein in an open conformation. Functions as a peptidyl-prolyl cis-trans isomerase. The protein is Trigger factor of Nitratidesulfovibrio vulgaris (strain DSM 19637 / Miyazaki F) (Desulfovibrio vulgaris).